A 244-amino-acid chain; its full sequence is Methylthioribulose-1-phosphate dehydratase (244 aa).

C89 is a binding site for substrate. Zn(2+)-binding residues include H107 and H109. E130 serves as the catalytic Proton donor/acceptor. Position 192 (H192) interacts with Zn(2+).

Belongs to the aldolase class II family. MtnB subfamily. It depends on Zn(2+) as a cofactor.

It is found in the cytoplasm. It catalyses the reaction 5-(methylsulfanyl)-D-ribulose 1-phosphate = 5-methylsulfanyl-2,3-dioxopentyl phosphate + H2O. Its pathway is amino-acid biosynthesis; L-methionine biosynthesis via salvage pathway; L-methionine from S-methyl-5-thio-alpha-D-ribose 1-phosphate: step 2/6. Functionally, catalyzes the dehydration of methylthioribulose-1-phosphate (MTRu-1-P) into 2,3-diketo-5-methylthiopentyl-1-phosphate (DK-MTP-1-P). The sequence is that of Methylthioribulose-1-phosphate dehydratase from Saccharomyces cerevisiae (strain ATCC 204508 / S288c) (Baker's yeast).